The chain runs to 355 residues: DNA polymerase IV (355 aa).

Positions 6-187 (IIHVDMDAFY…LPVGKIHGVG (182 aa)) constitute a UmuC domain. Mg(2+) is bound by residues aspartate 10 and aspartate 105. Glutamate 106 is an active-site residue.

The protein belongs to the DNA polymerase type-Y family. In terms of assembly, monomer. It depends on Mg(2+) as a cofactor.

It localises to the cytoplasm. It carries out the reaction DNA(n) + a 2'-deoxyribonucleoside 5'-triphosphate = DNA(n+1) + diphosphate. Functionally, poorly processive, error-prone DNA polymerase involved in untargeted mutagenesis. Copies undamaged DNA at stalled replication forks, which arise in vivo from mismatched or misaligned primer ends. These misaligned primers can be extended by PolIV. Exhibits no 3'-5' exonuclease (proofreading) activity. May be involved in translesional synthesis, in conjunction with the beta clamp from PolIII. The polypeptide is DNA polymerase IV (Alkalilimnicola ehrlichii (strain ATCC BAA-1101 / DSM 17681 / MLHE-1)).